Here is a 349-residue protein sequence, read N- to C-terminus: Deoxyguanosinetriphosphate triphosphohydrolase-like protein (349 aa).

One can recognise an HD domain in the interval 80–197 (RLTHTLEVAQ…VKYSDKIAYV (118 aa)).

This sequence belongs to the dGTPase family. Type 2 subfamily.

This is Deoxyguanosinetriphosphate triphosphohydrolase-like protein from Clostridium tetani (strain Massachusetts / E88).